Here is a 611-residue protein sequence, read N- to C-terminus: Polyphenol oxidase 4 (611 aa).

The Cu cation site is built by H57, H82, H91, H251, H255, and H283. Residues 80 to 82 (CTH) constitute a cross-link (2'-(S-cysteinyl)-histidine (Cys-His)). A substrate-binding site is contributed by H255. The propeptide at 380-611 (IKKSEGGKNP…GGLGALGRIF (232 aa)) is removed in mature form.

It belongs to the tyrosinase family. As to quaternary structure, heterotetramer. Requires Cu(2+) as cofactor. Post-translationally, the C-ter is probably cleaved after Gly-379 since the mature active protein is smaller than the protein encoded by the gene.

The enzyme catalyses 2 L-dopa + O2 = 2 L-dopaquinone + 2 H2O. The catalysed reaction is L-tyrosine + O2 = L-dopaquinone + H2O. In terms of biological role, copper-containing oxidase that catalyzes both the o-hydroxylation of monophenols and the subsequent oxidation of the resulting o-diphenols into reactive o-quinones, which evolve spontaneously to produce intermediates, which associate in dark brown pigments. Involved in the initial step of melanin synthesis. Melanins constitute a mechanism of defense and resistance to stress such as UV radiations, free radicals, gamma rays, dehydratation and extreme temperatures, and contribute to the fungal cell-wall resistance against hydrolytic enzymes in avoiding cellular lysis. Fungal pigments are also involved in the formation and stability of spores. This chain is Polyphenol oxidase 4 (PPO4), found in Agaricus bisporus (White button mushroom).